The following is a 277-amino-acid chain: Isoprenyl transferase 1 (277 aa).

The tract at residues 1 to 30 (MAVRGILGRQRREYRTPEPHPSGARPPKLG) is disordered. Residue D42 is part of the active site. D42 serves as a coordination point for Mg(2+). Substrate is bound by residues 43 to 46 (GNGR), W47, R55, H59, and 87 to 89 (STE). N90 serves as the catalytic Proton acceptor. Substrate contacts are provided by residues W91, R93, R210, and 216 to 218 (RTS). Residue E229 participates in Mg(2+) binding.

It belongs to the UPP synthase family. As to quaternary structure, homodimer. Requires Mg(2+) as cofactor.

Catalyzes the condensation of isopentenyl diphosphate (IPP) with allylic pyrophosphates generating different type of terpenoids. In Streptomyces coelicolor (strain ATCC BAA-471 / A3(2) / M145), this protein is Isoprenyl transferase 1.